The sequence spans 590 residues: Probable lysosomal cobalamin transporter (590 aa).

A run of 10 helical transmembrane segments spans residues 8–28 (LIWV…SIFI), 46–66 (IFTL…VALV), 94–114 (AVAY…VVPF), 145–165 (TVAF…VPIG), 190–210 (ALTF…VLYT), 314–334 (LLSG…MLLT), 348–367 (CGYI…VFVH), 376–396 (YILF…GIAT), 421–441 (ITTV…SMVV), and 508–528 (FFGI…LLVF). The disordered stretch occupies residues 567–590 (WEDITGRASRSPQVSGSAGRGTRE).

This sequence belongs to the LIMR family. LMBRD1 subfamily.

It is found in the lysosome membrane. Functionally, probable lysosomal cobalamin transporter. Required to export cobalamin from lysosomes allowing its conversion to cofactors. The polypeptide is Probable lysosomal cobalamin transporter (Ajellomyces capsulatus (strain NAm1 / WU24) (Darling's disease fungus)).